The primary structure comprises 339 residues: DNA-directed RNA polymerase subunit alpha (339 aa).

An alpha N-terminal domain (alpha-NTD) region spans residues methionine 1–glutamate 235. The alpha C-terminal domain (alpha-CTD) stretch occupies residues phenylalanine 251–tyrosine 339.

Belongs to the RNA polymerase alpha chain family. Homodimer. The RNAP catalytic core consists of 2 alpha, 1 beta, 1 beta' and 1 omega subunit. When a sigma factor is associated with the core the holoenzyme is formed, which can initiate transcription.

The catalysed reaction is RNA(n) + a ribonucleoside 5'-triphosphate = RNA(n+1) + diphosphate. Its function is as follows. DNA-dependent RNA polymerase catalyzes the transcription of DNA into RNA using the four ribonucleoside triphosphates as substrates. The sequence is that of DNA-directed RNA polymerase subunit alpha from Rhodopseudomonas palustris (strain HaA2).